The sequence spans 86 residues: Small ribosomal subunit protein bS20 (86 aa).

The interval Met1–Lys25 is disordered.

This sequence belongs to the bacterial ribosomal protein bS20 family.

In terms of biological role, binds directly to 16S ribosomal RNA. This chain is Small ribosomal subunit protein bS20, found in Mycobacterium bovis (strain ATCC BAA-935 / AF2122/97).